The sequence spans 314 residues: Ribosomal RNA small subunit methyltransferase H (314 aa).

Residues 34–36, Asp-54, Phe-83, Asp-104, and Gln-111 contribute to the S-adenosyl-L-methionine site; that span reads GGH.

It belongs to the methyltransferase superfamily. RsmH family.

Its subcellular location is the cytoplasm. It catalyses the reaction cytidine(1402) in 16S rRNA + S-adenosyl-L-methionine = N(4)-methylcytidine(1402) in 16S rRNA + S-adenosyl-L-homocysteine + H(+). Functionally, specifically methylates the N4 position of cytidine in position 1402 (C1402) of 16S rRNA. The polypeptide is Ribosomal RNA small subunit methyltransferase H (Ligilactobacillus salivarius (strain UCC118) (Lactobacillus salivarius)).